A 511-amino-acid polypeptide reads, in one-letter code: Maturase K (511 aa).

Belongs to the intron maturase 2 family. MatK subfamily.

The protein resides in the plastid. It is found in the chloroplast. Functionally, usually encoded in the trnK tRNA gene intron. Probably assists in splicing its own and other chloroplast group II introns. The sequence is that of Maturase K from Diplacus aurantiacus (Orange bush monkey flower).